A 140-amino-acid chain; its full sequence is Protein archease (140 aa).

The Ca(2+) site is built by D11, D139, and L140.

Belongs to the archease family.

Activates the tRNA-splicing ligase complex by facilitating the enzymatic turnover of catalytic subunit RtcB. Acts by promoting the guanylylation of RtcB, a key intermediate step in tRNA ligation. Can also alter the NTP specificity of RtcB such that ATP, dGTP or ITP is used efficiently. In Methanopyrus kandleri (strain AV19 / DSM 6324 / JCM 9639 / NBRC 100938), this protein is Protein archease.